Reading from the N-terminus, the 261-residue chain is Glutamate racemase (261 aa).

Residues 7–8 (DS) and 39–40 (YG) each bind substrate. Residue Cys-71 is the Proton donor/acceptor of the active site. 72-73 (NT) contributes to the substrate binding site. Cys-184 (proton donor/acceptor) is an active-site residue. Residue 185-186 (TH) coordinates substrate.

It belongs to the aspartate/glutamate racemases family.

The catalysed reaction is L-glutamate = D-glutamate. The protein operates within cell wall biogenesis; peptidoglycan biosynthesis. Its function is as follows. Provides the (R)-glutamate required for cell wall biosynthesis. This is Glutamate racemase from Aliarcobacter butzleri (strain RM4018) (Arcobacter butzleri).